The sequence spans 570 residues: Sulfite reductase [NADPH] hemoprotein beta-component (570 aa).

Positions 434, 440, 479, and 483 each coordinate [4Fe-4S] cluster. C483 is a siroheme binding site.

This sequence belongs to the nitrite and sulfite reductase 4Fe-4S domain family. As to quaternary structure, alpha(8)-beta(8). The alpha component is a flavoprotein, the beta component is a hemoprotein. Siroheme serves as cofactor. Requires [4Fe-4S] cluster as cofactor.

The catalysed reaction is hydrogen sulfide + 3 NADP(+) + 3 H2O = sulfite + 3 NADPH + 4 H(+). It participates in sulfur metabolism; hydrogen sulfide biosynthesis; hydrogen sulfide from sulfite (NADPH route): step 1/1. Component of the sulfite reductase complex that catalyzes the 6-electron reduction of sulfite to sulfide. This is one of several activities required for the biosynthesis of L-cysteine from sulfate. In Escherichia fergusonii (strain ATCC 35469 / DSM 13698 / CCUG 18766 / IAM 14443 / JCM 21226 / LMG 7866 / NBRC 102419 / NCTC 12128 / CDC 0568-73), this protein is Sulfite reductase [NADPH] hemoprotein beta-component.